We begin with the raw amino-acid sequence, 373 residues long: Arfaptin-1 (373 aa).

The interval 1–47 (MAQESPKNSAAEIPVTSNGEVDDSREHSFNRDLKHSLPSGLGLSETQ) is disordered. An N-acetylalanine modification is found at A2. Phosphoserine occurs at positions 5, 28, 36, 39, 69, 79, and 132. A compositionally biased stretch (basic and acidic residues) spans 22–35 (DDSREHSFNRDLKH). An AH domain is found at 153 to 353 (TVDLELEAQI…NQKQLEQTLK (201 aa)). Position 361 is a phosphothreonine (T361).

In terms of assembly, forms homodimers or heterodimers with ARFIP2. Interacts with non-myristoylated GTP-bound ARF3, but not to GDP-bound ARF3. Interacts with ARF1. Binds with lower affinity to ARF5 and with very little affinity to ARF6. Interacts with ARL1. Interacts with ATG9A. Post-translationally, phosphorylated by PRKD1; phosphorylation delocalizes ARFIP1 from the Golgi and disrupts its ability to inhibit the activity of ADP-ribosylation factor, an important component of the vesicle scission machinery. Ubiquitously expressed. Higher levels in liver, pancreas, placenta, skeletal muscle and heart.

It localises to the golgi apparatus. Its subcellular location is the trans-Golgi network membrane. Functionally, plays a role in controlling biogenesis of secretory granules at the trans-Golgi network. Mechanistically, binds ARF-GTP at the neck of a growing secretory granule precursor and forms a protective scaffold. Once the granule precursor has been completely loaded, active PRKD1 phosphorylates ARFIP1 and releases it from ARFs. In turn, ARFs induce fission. Through this mechanism, ensures proper secretory granule formation at the Golgi of pancreatic beta cells. In Homo sapiens (Human), this protein is Arfaptin-1.